We begin with the raw amino-acid sequence, 252 residues long: Chitooligosaccharide deacetylase (252 aa).

Residues His-61 and His-125 each contribute to the Mg(2+) site.

The protein belongs to the YdjC deacetylase family. ChbG subfamily. In terms of assembly, homodimer. Mg(2+) is required as a cofactor.

Its subcellular location is the cytoplasm. The enzyme catalyses N,N'-diacetylchitobiose + H2O = N-acetyl-beta-D-glucosaminyl-(1-&gt;4)-D-glucosamine + acetate. It carries out the reaction diacetylchitobiose-6'-phosphate + H2O = N'-monoacetylchitobiose-6'-phosphate + acetate. The protein operates within glycan degradation; chitin degradation. In terms of biological role, involved in the degradation of chitin. ChbG is essential for growth on the acetylated chitooligosaccharides chitobiose and chitotriose but is dispensable for growth on cellobiose and chitosan dimer, the deacetylated form of chitobiose. Deacetylation of chitobiose-6-P and chitotriose-6-P is necessary for both the activation of the chb promoter by the regulatory protein ChbR and the hydrolysis of phosphorylated beta-glucosides by the phospho-beta-glucosidase ChbF. Catalyzes the removal of only one acetyl group from chitobiose-6-P to yield monoacetylchitobiose-6-P, the inducer of ChbR and the substrate of ChbF. This Salmonella typhimurium (strain LT2 / SGSC1412 / ATCC 700720) protein is Chitooligosaccharide deacetylase.